The primary structure comprises 205 residues: Large ribosomal subunit protein bL25 (205 aa).

The interval 185–205 (PAGAVSEAAEGGEAAGETPAA) is disordered. A compositionally biased stretch (low complexity) spans 186–205 (AGAVSEAAEGGEAAGETPAA).

Belongs to the bacterial ribosomal protein bL25 family. CTC subfamily. As to quaternary structure, part of the 50S ribosomal subunit; part of the 5S rRNA/L5/L18/L25 subcomplex. Contacts the 5S rRNA. Binds to the 5S rRNA independently of L5 and L18.

Functionally, this is one of the proteins that binds to the 5S RNA in the ribosome where it forms part of the central protuberance. This Cupriavidus taiwanensis (strain DSM 17343 / BCRC 17206 / CCUG 44338 / CIP 107171 / LMG 19424 / R1) (Ralstonia taiwanensis (strain LMG 19424)) protein is Large ribosomal subunit protein bL25.